The following is a 98-amino-acid chain: Peptide YY (98 aa).

An N-terminal signal peptide occupies residues 1–28 (MVAVRRPWPVTVAMLLILLACLGALVDA). Position 41 is a phosphoserine (Ser41). The residue at position 64 (Tyr64) is a Tyrosine amide. Positions 68 to 98 (DVPAALFSKLLFTDDSDSENLPFRPEGLDQW) are excised as a propeptide.

The protein belongs to the NPY family. Post-translationally, the peptide YY form is cleaved at Pro-30 by the prolyl endopeptidase FAP (seprase) activity (in vitro) to generate peptide YY(3-36).

It is found in the secreted. Functionally, this gut peptide inhibits exocrine pancreatic secretion, has a vasoconstrictory action and inhibitis jejunal and colonic mobility. In Mus musculus (Mouse), this protein is Peptide YY (Pyy).